The sequence spans 386 residues: Bifunctional enzyme IspD/IspF (386 aa).

Residues 1-231 (MKNGAVIIPA…REKKEPMQKI (231 aa)) form a 2-C-methyl-D-erythritol 4-phosphate cytidylyltransferase region. A 2-C-methyl-D-erythritol 2,4-cyclodiphosphate synthase region spans residues 232 to 386 (RIGHGFDAHQ…SCHAVVLLQQ (155 aa)). A divalent metal cation contacts are provided by D238 and H240. 4-CDP-2-C-methyl-D-erythritol 2-phosphate contacts are provided by residues 238–240 (DAH) and 264–265 (HS). H272 provides a ligand contact to a divalent metal cation. 4-CDP-2-C-methyl-D-erythritol 2-phosphate contacts are provided by residues 286–288 (DIG), 362–365 (TTTE), Y369, and R372.

It in the N-terminal section; belongs to the IspD/TarI cytidylyltransferase family. IspD subfamily. The protein in the C-terminal section; belongs to the IspF family. Requires a divalent metal cation as cofactor.

It carries out the reaction 2-C-methyl-D-erythritol 4-phosphate + CTP + H(+) = 4-CDP-2-C-methyl-D-erythritol + diphosphate. The enzyme catalyses 4-CDP-2-C-methyl-D-erythritol 2-phosphate = 2-C-methyl-D-erythritol 2,4-cyclic diphosphate + CMP. The protein operates within isoprenoid biosynthesis; isopentenyl diphosphate biosynthesis via DXP pathway; isopentenyl diphosphate from 1-deoxy-D-xylulose 5-phosphate: step 2/6. It participates in isoprenoid biosynthesis; isopentenyl diphosphate biosynthesis via DXP pathway; isopentenyl diphosphate from 1-deoxy-D-xylulose 5-phosphate: step 4/6. Functionally, bifunctional enzyme that catalyzes the formation of 4-diphosphocytidyl-2-C-methyl-D-erythritol from CTP and 2-C-methyl-D-erythritol 4-phosphate (MEP) (IspD), and catalyzes the conversion of 4-diphosphocytidyl-2-C-methyl-D-erythritol 2-phosphate (CDP-ME2P) to 2-C-methyl-D-erythritol 2,4-cyclodiphosphate (ME-CPP) with a corresponding release of cytidine 5-monophosphate (CMP) (IspF). The sequence is that of Bifunctional enzyme IspD/IspF from Desulfotalea psychrophila (strain LSv54 / DSM 12343).